Consider the following 367-residue polypeptide: tRNA-specific 2-thiouridylase MnmA (367 aa).

Residues 24–31 (AMSGGVDS) and Leu-50 each bind ATP. Cys-115 acts as the Nucleophile in catalysis. Cys-115 and Cys-211 are disulfide-bonded. Residue Gly-139 participates in ATP binding. Residues 161–163 (KDQ) form an interaction with tRNA region. Residue Cys-211 is the Cysteine persulfide intermediate of the active site.

Belongs to the MnmA/TRMU family.

It localises to the cytoplasm. The enzyme catalyses S-sulfanyl-L-cysteinyl-[protein] + uridine(34) in tRNA + AH2 + ATP = 2-thiouridine(34) in tRNA + L-cysteinyl-[protein] + A + AMP + diphosphate + H(+). In terms of biological role, catalyzes the 2-thiolation of uridine at the wobble position (U34) of tRNA, leading to the formation of s(2)U34. This Ehrlichia canis (strain Jake) protein is tRNA-specific 2-thiouridylase MnmA.